A 199-amino-acid polypeptide reads, in one-letter code: 7-methyl-GTP pyrophosphatase (199 aa).

The Proton acceptor role is filled by Asp-74.

Belongs to the Maf family. YceF subfamily. Requires a divalent metal cation as cofactor.

Its subcellular location is the cytoplasm. The enzyme catalyses N(7)-methyl-GTP + H2O = N(7)-methyl-GMP + diphosphate + H(+). In terms of biological role, nucleoside triphosphate pyrophosphatase that hydrolyzes 7-methyl-GTP (m(7)GTP). May have a dual role in cell division arrest and in preventing the incorporation of modified nucleotides into cellular nucleic acids. This chain is 7-methyl-GTP pyrophosphatase, found in Albidiferax ferrireducens (strain ATCC BAA-621 / DSM 15236 / T118) (Rhodoferax ferrireducens).